A 1024-amino-acid polypeptide reads, in one-letter code: Beta-galactosidase (1024 aa).

2 residues coordinate substrate: N103 and D202. Residue D202 coordinates Na(+). E417, H419, and E462 together coordinate Mg(2+). Substrate contacts are provided by residues E462 and 538-541; that span reads EYAH. E462 functions as the Proton donor in the catalytic mechanism. E538 functions as the Nucleophile in the catalytic mechanism. Residue N598 participates in Mg(2+) binding. Residues F602 and N605 each coordinate Na(+). Residues N605 and W1000 each coordinate substrate.

Belongs to the glycosyl hydrolase 2 family. Homotetramer. The cofactor is Mg(2+). Na(+) serves as cofactor.

It carries out the reaction Hydrolysis of terminal non-reducing beta-D-galactose residues in beta-D-galactosides.. The polypeptide is Beta-galactosidase (Escherichia coli (strain SMS-3-5 / SECEC)).